The primary structure comprises 567 residues: Urease subunit alpha (567 aa).

The Urease domain occupies 129 to 567; that stretch reads GGIDAHIHFI…LPLTQRYCLF (439 aa). Positions 134, 136, and 217 each coordinate Ni(2+). K217 bears the N6-carboxylysine mark. H219 serves as a coordination point for substrate. Positions 246 and 272 each coordinate Ni(2+). H320 serves as the catalytic Proton donor. D360 provides a ligand contact to Ni(2+).

Belongs to the metallo-dependent hydrolases superfamily. Urease alpha subunit family. Heterotrimer of UreA (gamma), UreB (beta) and UreC (alpha) subunits. Three heterotrimers associate to form the active enzyme. Ni cation is required as a cofactor. Carboxylation allows a single lysine to coordinate two nickel ions.

The protein resides in the cytoplasm. The enzyme catalyses urea + 2 H2O + H(+) = hydrogencarbonate + 2 NH4(+). Its pathway is nitrogen metabolism; urea degradation; CO(2) and NH(3) from urea (urease route): step 1/1. This chain is Urease subunit alpha, found in Psychromonas ingrahamii (strain DSM 17664 / CCUG 51855 / 37).